We begin with the raw amino-acid sequence, 292 residues long: Bifunctional protein FolD (292 aa).

Residues 166 to 168 (GRS), serine 191, and isoleucine 232 contribute to the NADP(+) site.

The protein belongs to the tetrahydrofolate dehydrogenase/cyclohydrolase family. Homodimer.

The catalysed reaction is (6R)-5,10-methylene-5,6,7,8-tetrahydrofolate + NADP(+) = (6R)-5,10-methenyltetrahydrofolate + NADPH. It catalyses the reaction (6R)-5,10-methenyltetrahydrofolate + H2O = (6R)-10-formyltetrahydrofolate + H(+). Its pathway is one-carbon metabolism; tetrahydrofolate interconversion. Functionally, catalyzes the oxidation of 5,10-methylenetetrahydrofolate to 5,10-methenyltetrahydrofolate and then the hydrolysis of 5,10-methenyltetrahydrofolate to 10-formyltetrahydrofolate. The polypeptide is Bifunctional protein FolD (Synechococcus sp. (strain RCC307)).